The primary structure comprises 555 residues: Methyl-coenzyme M reductase subunit alpha (555 aa).

Glutamine 152 serves as a coordination point for coenzyme F430. Coenzyme B-binding positions include arginine 230, 261–262 (KH), and arginine 275. Tyrosine 337 and tyrosine 448 together coordinate coenzyme M.

It belongs to the methyl-coenzyme M reductase alpha subunit family. MCR is a hexamer of two alpha, two beta, and two gamma chains, forming a dimer of heterotrimers. Requires coenzyme F430 as cofactor.

It is found in the cytoplasm. It carries out the reaction coenzyme B + methyl-coenzyme M = methane + coenzyme M-coenzyme B heterodisulfide. Its pathway is one-carbon metabolism; methyl-coenzyme M reduction; methane from methyl-coenzyme M: step 1/1. In terms of biological role, component of the methyl-coenzyme M reductase (MCR) I that catalyzes the reductive cleavage of methyl-coenzyme M (CoM-S-CH3 or 2-(methylthio)ethanesulfonate) using coenzyme B (CoB or 7-mercaptoheptanoylthreonine phosphate) as reductant which results in the production of methane and the mixed heterodisulfide of CoB and CoM (CoM-S-S-CoB). This is the final step in methanogenesis. The protein is Methyl-coenzyme M reductase subunit alpha (mcrA) of Methanococcus voltae.